Reading from the N-terminus, the 561-residue chain is Putative transport protein ASA_2308 (561 aa).

5 helical membrane-spanning segments follow: residues leucine 8–glycine 28, isoleucine 37–phenylalanine 57, phenylalanine 66–leucine 86, isoleucine 90–leucine 110, and asparagine 161–valine 181. RCK C-terminal domains lie at serine 206–asparagine 291 and lysine 293–phenylalanine 376. 5 helical membrane-spanning segments follow: residues leucine 386–phenylalanine 406, leucine 409–leucine 429, leucine 450–histidine 470, alanine 476–phenylalanine 496, and threonine 541–phenylalanine 561.

The protein belongs to the AAE transporter (TC 2.A.81) family. YbjL subfamily.

Its subcellular location is the cell membrane. In Aeromonas salmonicida (strain A449), this protein is Putative transport protein ASA_2308.